An 80-amino-acid chain; its full sequence is uncharacterized protein (80 aa).

It belongs to the 2-oxoacid dehydrogenase family.

This is an uncharacterized protein from Mycobacterium tuberculosis (strain CDC 1551 / Oshkosh).